The following is a 47-amino-acid chain: Large ribosomal subunit protein bL33 (47 aa).

The protein belongs to the bacterial ribosomal protein bL33 family.

The polypeptide is Large ribosomal subunit protein bL33 (Staphylococcus xylosus).